Here is a 687-residue protein sequence, read N- to C-terminus: Immune inhibitor A (687 aa).

A compositionally biased stretch (basic and acidic residues) spans 1–12 (MKDAKADTKEKL). The or 32 signal peptide spans 1–25 (MKDAKADTKEKLNQPATGTPAATGP). The segment at 1–43 (MKDAKADTKEKLNQPATGTPAATGPVKGGLNGKVPTSPAKQKA) is disordered. Positions 26 to 40 (VKGGLNGKVPTSPAK) are excised as a propeptide. Zn(2+) is bound at residue H266. The active site involves E267. Position 270 (H270) interacts with Zn(2+).

Belongs to the peptidase M6 family. Zn(2+) is required as a cofactor. Requires Ca(2+) as cofactor.

The protein localises to the secreted. Neutral metalloprotease that is secreted to degrade antibacterial proteins produced by the insect host for its defense (attacins and cecropins). Probably degrades some unknown crucial protein(s) too, since it is toxic when injected to insect larvae. This chain is Immune inhibitor A (ina), found in Bacillus thuringiensis subsp. alesti.